The following is a 718-amino-acid chain: Protein Smaug homolog 1 (718 aa).

Phosphoserine is present on serine 168. The interval 278–310 (ARGPQCLPSDHAPLSPQSSVASSGSGGSEHLED) is disordered. An SAM domain is found at 323–396 (SGMKDVPAWL…LKSLERDIIE (74 aa)). Disordered regions lie at residues 417–474 (AYGS…LQPH) and 572–601 (NRGFGQSDSLPTAGSMGSGMGRRNPRQYQI). Serine 420 is modified (phosphoserine). Residue threonine 424 is modified to Phosphothreonine. Over residues 453-466 (GATATGATATPSAG) the composition is skewed to low complexity. Omega-N-methylarginine is present on arginine 573. Serine 580 is modified (phosphoserine).

It belongs to the SMAUG family.

It localises to the cytoplasm. The protein localises to the cell projection. It is found in the dendrite. Its subcellular location is the synapse. The protein resides in the synaptosome. Its function is as follows. Acts as a translational repressor of SRE-containing messengers. The sequence is that of Protein Smaug homolog 1 (SAMD4A) from Macaca fascicularis (Crab-eating macaque).